Consider the following 252-residue polypeptide: Phosphoglycolate phosphatase (252 aa).

Asp-13 (nucleophile) is an active-site residue. The Mg(2+) site is built by Asp-13, Asp-15, and Asp-192.

This sequence belongs to the HAD-like hydrolase superfamily. CbbY/CbbZ/Gph/YieH family. As to quaternary structure, monomer. Mg(2+) is required as a cofactor. The cofactor is chloride.

The enzyme catalyses 2-phosphoglycolate + H2O = glycolate + phosphate. Its pathway is organic acid metabolism; glycolate biosynthesis; glycolate from 2-phosphoglycolate: step 1/1. Specifically catalyzes the dephosphorylation of 2-phosphoglycolate. Is involved in the dissimilation of the intracellular 2-phosphoglycolate formed during the DNA repair of 3'-phosphoglycolate ends, a major class of DNA lesions induced by oxidative stress. This Shigella dysenteriae serotype 1 (strain Sd197) protein is Phosphoglycolate phosphatase.